Here is a 303-residue protein sequence, read N- to C-terminus: UDP-3-O-acyl-N-acetylglucosamine deacetylase (303 aa).

Zn(2+) contacts are provided by His-78, His-237, and Asp-241. The active-site Proton donor is His-264.

This sequence belongs to the LpxC family. Zn(2+) serves as cofactor.

It carries out the reaction a UDP-3-O-[(3R)-3-hydroxyacyl]-N-acetyl-alpha-D-glucosamine + H2O = a UDP-3-O-[(3R)-3-hydroxyacyl]-alpha-D-glucosamine + acetate. It participates in glycolipid biosynthesis; lipid IV(A) biosynthesis; lipid IV(A) from (3R)-3-hydroxytetradecanoyl-[acyl-carrier-protein] and UDP-N-acetyl-alpha-D-glucosamine: step 2/6. Its function is as follows. Catalyzes the hydrolysis of UDP-3-O-myristoyl-N-acetylglucosamine to form UDP-3-O-myristoylglucosamine and acetate, the committed step in lipid A biosynthesis. This Pseudomonas fluorescens (strain SBW25) protein is UDP-3-O-acyl-N-acetylglucosamine deacetylase.